Here is a 513-residue protein sequence, read N- to C-terminus: GMP synthase [glutamine-hydrolyzing] (513 aa).

The region spanning 5 to 195 is the Glutamine amidotransferase type-1 domain; sequence LVLVIDFGGQ…VYNICGCTGD (191 aa). The active-site Nucleophile is the C82. Catalysis depends on residues H169 and E171. Residues 196–388 enclose the GMPS ATP-PPase domain; it reads WKMDSFVEKT…LGIPEKLVFR (193 aa). Position 223–229 (223–229) interacts with ATP; it reads SGGVDSS.

In terms of assembly, homodimer.

It catalyses the reaction XMP + L-glutamine + ATP + H2O = GMP + L-glutamate + AMP + diphosphate + 2 H(+). Its pathway is purine metabolism; GMP biosynthesis; GMP from XMP (L-Gln route): step 1/1. In terms of biological role, catalyzes the synthesis of GMP from XMP. In Clostridium botulinum (strain Alaska E43 / Type E3), this protein is GMP synthase [glutamine-hydrolyzing].